A 128-amino-acid polypeptide reads, in one-letter code: Holin-like protein CidA (128 aa).

The next 3 membrane-spanning stretches (helical) occupy residues 23–43 (LIVE…IVIF), 58–78 (IGAL…AVGI), and 84–104 (ILAE…FVVM).

It belongs to the CidA/LrgA family. CidA subfamily.

The protein localises to the cell membrane. In terms of biological role, increases the activity of extracellular murein hydrolases possibly by mediating their export via hole formation. Inhibited by the antiholin-like proteins LrgAB. In an unstressed cell, the LrgAB products probably inhibit the function of the CidA protein. When a cell is stressed by the addition of antibiotics or by other factors in the environment, CidA possibly oligomerizes within the bacterial cell membrane, creating lesions that disrupt the proton motive force, which in turn results in loss of cell viability. These lesions are also hypothesized to regulate the subsequent cell lysis by either allowing the murein hydrolases access to the cell wall substrate and/or regulating their activity by a possible change in the cell wall pH that results from loss of membrane potential. This Bacillus licheniformis (strain ATCC 14580 / DSM 13 / JCM 2505 / CCUG 7422 / NBRC 12200 / NCIMB 9375 / NCTC 10341 / NRRL NRS-1264 / Gibson 46) protein is Holin-like protein CidA.